Reading from the N-terminus, the 351-residue chain is Protein RecA (351 aa).

67 to 74 is an ATP binding site; it reads GPESSGKT.

This sequence belongs to the RecA family.

It is found in the cytoplasm. Its function is as follows. Can catalyze the hydrolysis of ATP in the presence of single-stranded DNA, the ATP-dependent uptake of single-stranded DNA by duplex DNA, and the ATP-dependent hybridization of homologous single-stranded DNAs. It interacts with LexA causing its activation and leading to its autocatalytic cleavage. In Mannheimia succiniciproducens (strain KCTC 0769BP / MBEL55E), this protein is Protein RecA.